The sequence spans 155 residues: Ribonuclease H (155 aa).

The RNase H type-1 domain maps to 9 to 150 (DGQQVEMWTD…ADALANQGVE (142 aa)). Mg(2+)-binding residues include Asp18, Glu56, Asp78, and Asp142.

It belongs to the RNase H family. As to quaternary structure, monomer. Mg(2+) serves as cofactor.

The protein localises to the cytoplasm. The catalysed reaction is Endonucleolytic cleavage to 5'-phosphomonoester.. Functionally, endonuclease that specifically degrades the RNA of RNA-DNA hybrids. This chain is Ribonuclease H, found in Bordetella bronchiseptica (strain ATCC BAA-588 / NCTC 13252 / RB50) (Alcaligenes bronchisepticus).